Reading from the N-terminus, the 274-residue chain is MQKVVKLNNIKIGNDLPFVLIAGPCQIEGKDHALFMAEKLVKLTSKLEIPFIYKSSFDKANRTSVNGIRGLGIEKGLEILSKVKSEFDCPIVTDVHSESQCTETAEIADILQIPAFLCRQTDLLQAAAKTGKIVKVKKGQFLAPWDMKNVQTKLEAFGVKDILFTERGACFGYNNLVSDMRSLAIIAELNVPVVFDATHSVQQPGGLGGSTGGERKYVELLAKAATAVGIAGMYMEVHQDPDNAPSDGPCMIKLDNLESILIKLKKYDKITKEK.

It belongs to the KdsA family.

The protein localises to the cytoplasm. The catalysed reaction is D-arabinose 5-phosphate + phosphoenolpyruvate + H2O = 3-deoxy-alpha-D-manno-2-octulosonate-8-phosphate + phosphate. Its pathway is carbohydrate biosynthesis; 3-deoxy-D-manno-octulosonate biosynthesis; 3-deoxy-D-manno-octulosonate from D-ribulose 5-phosphate: step 2/3. It functions in the pathway bacterial outer membrane biogenesis; lipopolysaccharide biosynthesis. The sequence is that of 2-dehydro-3-deoxyphosphooctonate aldolase from Rickettsia felis (strain ATCC VR-1525 / URRWXCal2) (Rickettsia azadi).